The following is a 434-amino-acid chain: UDP-N-acetylglucosamine 1-carboxyvinyltransferase (434 aa).

22 to 23 provides a ligand contact to phosphoenolpyruvate; sequence KN. Position 97 (Arg-97) interacts with UDP-N-acetyl-alpha-D-glucosamine. Residue Asp-121 is the Proton donor of the active site. Asp-319 and Met-341 together coordinate UDP-N-acetyl-alpha-D-glucosamine.

This sequence belongs to the EPSP synthase family. MurA subfamily.

Its subcellular location is the cytoplasm. The catalysed reaction is phosphoenolpyruvate + UDP-N-acetyl-alpha-D-glucosamine = UDP-N-acetyl-3-O-(1-carboxyvinyl)-alpha-D-glucosamine + phosphate. The protein operates within cell wall biogenesis; peptidoglycan biosynthesis. In terms of biological role, cell wall formation. Adds enolpyruvyl to UDP-N-acetylglucosamine. The polypeptide is UDP-N-acetylglucosamine 1-carboxyvinyltransferase (Bacteroides thetaiotaomicron (strain ATCC 29148 / DSM 2079 / JCM 5827 / CCUG 10774 / NCTC 10582 / VPI-5482 / E50)).